A 493-amino-acid polypeptide reads, in one-letter code: Cytochrome P450 monooxygenase mfmF (493 aa).

Transmembrane regions (helical) follow at residues serine 3–phenylalanine 23 and valine 301–valine 321. Cysteine 440 is a binding site for heme.

Belongs to the cytochrome P450 family. Heme is required as a cofactor.

Its subcellular location is the membrane. Its pathway is secondary metabolite biosynthesis; terpenoid biosynthesis. Functionally, cytochrome P450 monooxygenase; part of the gene cluster that mediates the biosynthesis of the phthalide-terpenoid hybrid 11'-O-desmethylfendlerol. Within the pathway, mfmF catalyzes C-3 hydroxylation of 5-hydroxy-4-(hydroxymethyl)-7-methoxy-6-methylphthalide to yield cyclopolic acid. The biosynthesis of 11'-O-desmethylfendlerol begins with the NR-PKS mfmB that forms 3,5-dimethylorsellinic acid (DMOA), which is then transformed into the phthalide 5,7-dihydroxy-4-(hydroxymethyl)-6-methylphthalide by the cytochrome P450 monooxygenase mfmA and the hydrolase mfmC. Subsequently, the methyltransferase mfmE catalyzes 7-O-methylation to yield 5-hydroxy-4-(hydroxymethyl)-7-methoxy-6-methylphthalide, which undergoes C-3 hydroxylation by the cytochrome P450 monooxygenase mfmF. The resultant cyclopolic acid (2,5-dihydroxy-4-(hydroxymethyl)-7-methoxy-6-methylphthalide) is then farnesylated by the DMATS-type prenyltransferase mfmD to afford 5-O-farnesylcyclopolic acid. Finally, the Pyr4-family terpene cyclase mfmH cyclizes the farnesyl moiety of 5-O-farnesylcyclopolic acid into a drimane-like structure, thus completing the biosynthesis of 11'-O-desmethylfendlerol. In Annulohypoxylon moriforme (Filamentous fungus), this protein is Cytochrome P450 monooxygenase mfmF.